The following is a 130-amino-acid chain: C-X-C motif chemokine 5 (130 aa).

The signal sequence occupies residues 1–37 (MSFQLRSSARIPSRSCSSFTLLAFLLLFTLPQHRAQA). 2 disulfide bridges follow: Cys50–Cys76 and Cys52–Cys93.

Belongs to the intercrine alpha (chemokine CxC) family. As to quaternary structure, monomer. Homodimer.

Its subcellular location is the secreted. Functionally, may participate in the recruitment of inflammatory cells by injured or infected tissue. This chain is C-X-C motif chemokine 5 (Cxcl5), found in Rattus norvegicus (Rat).